Reading from the N-terminus, the 176-residue chain is Inner membrane-spanning protein YciB (176 aa).

The next 6 helical transmembrane spans lie at 3–23, 24–44, 49–69, 81–101, 119–139, and 149–169; these read FLFD…WGIF, TATA…AFRH, TMLW…LVLH, LYWL…NNLI, LNVA…YVVH, and FKLF…SLWL.

This sequence belongs to the YciB family.

The protein localises to the cell inner membrane. Functionally, plays a role in cell envelope biogenesis, maintenance of cell envelope integrity and membrane homeostasis. This chain is Inner membrane-spanning protein YciB, found in Burkholderia ambifaria (strain MC40-6).